Here is a 107-residue protein sequence, read N- to C-terminus: Iron-binding protein IscA (107 aa).

Positions 35, 99, and 101 each coordinate Fe cation.

This sequence belongs to the HesB/IscA family. In terms of assembly, homodimer; may form tetramers and higher multimers. The cofactor is Fe cation.

Its function is as follows. Is able to transfer iron-sulfur clusters to apo-ferredoxin. Multiple cycles of [2Fe2S] cluster formation and transfer are observed, suggesting that IscA acts catalytically. Recruits intracellular free iron so as to provide iron for the assembly of transient iron-sulfur cluster in IscU in the presence of IscS, L-cysteine and the thioredoxin reductase system TrxA/TrxB. The protein is Iron-binding protein IscA of Salmonella newport (strain SL254).